The following is a 471-amino-acid chain: 3-isopropylmalate dehydratase large subunit (471 aa).

Cysteine 347, cysteine 407, and cysteine 410 together coordinate [4Fe-4S] cluster.

Belongs to the aconitase/IPM isomerase family. LeuC type 1 subfamily. Heterodimer of LeuC and LeuD. [4Fe-4S] cluster serves as cofactor.

The enzyme catalyses (2R,3S)-3-isopropylmalate = (2S)-2-isopropylmalate. It functions in the pathway amino-acid biosynthesis; L-leucine biosynthesis; L-leucine from 3-methyl-2-oxobutanoate: step 2/4. Catalyzes the isomerization between 2-isopropylmalate and 3-isopropylmalate, via the formation of 2-isopropylmaleate. The polypeptide is 3-isopropylmalate dehydratase large subunit (Granulibacter bethesdensis (strain ATCC BAA-1260 / CGDNIH1)).